A 243-amino-acid chain; its full sequence is Triosephosphate isomerase (243 aa).

Position 9–11 (9–11 (NWK)) interacts with substrate. Histidine 96 functions as the Electrophile in the catalytic mechanism. Residue glutamate 165 is the Proton acceptor of the active site. Substrate-binding positions include glycine 171, serine 204, and 225 to 226 (GG).

The protein belongs to the triosephosphate isomerase family. In terms of assembly, homodimer.

It localises to the cytoplasm. The enzyme catalyses D-glyceraldehyde 3-phosphate = dihydroxyacetone phosphate. It participates in carbohydrate biosynthesis; gluconeogenesis. The protein operates within carbohydrate degradation; glycolysis; D-glyceraldehyde 3-phosphate from glycerone phosphate: step 1/1. In terms of biological role, involved in the gluconeogenesis. Catalyzes stereospecifically the conversion of dihydroxyacetone phosphate (DHAP) to D-glyceraldehyde-3-phosphate (G3P). The polypeptide is Triosephosphate isomerase (Synechococcus sp. (strain CC9902)).